Here is a 219-residue protein sequence, read N- to C-terminus: Probable N-acetyltransferase camello (219 aa).

Helical transmembrane passes span 42–62 and 64–84; these read FYFI…SYVL and LTSL…EFHG. The N-acetyltransferase domain maps to 62–218; the sequence is LSLTSLVALL…TVIYYRYDIK (157 aa).

The protein belongs to the camello family. As to expression, at the beginning of gastrulation, expressed in deep cells of the presumptive mesoderm. At later gastrulation stages, expressed at the interface between already involuted and preinvoluted mesoderm. At late neurula and tailbud stages, expressed in the deep mass of cells lying ventrally and laterally to the closed blastopore.

It localises to the golgi apparatus membrane. Its function is as follows. Plays a role in regulation of gastrulation, possibly by controlled reduction of cell adhesion which is necessary for optimal cell motility. This Xenopus laevis (African clawed frog) protein is Probable N-acetyltransferase camello.